The primary structure comprises 141 residues: Large ribosomal subunit protein uL11 (141 aa).

The protein belongs to the universal ribosomal protein uL11 family. As to quaternary structure, part of the ribosomal stalk of the 50S ribosomal subunit. Interacts with L10 and the large rRNA to form the base of the stalk. L10 forms an elongated spine to which L12 dimers bind in a sequential fashion forming a multimeric L10(L12)X complex. One or more lysine residues are methylated.

In terms of biological role, forms part of the ribosomal stalk which helps the ribosome interact with GTP-bound translation factors. The polypeptide is Large ribosomal subunit protein uL11 (Prochlorococcus marinus (strain MIT 9515)).